Here is a 288-residue protein sequence, read N- to C-terminus: Phosphatidylserine decarboxylase proenzyme (288 aa).

Active-site charge relay system; for autoendoproteolytic cleavage activity residues include Asp-101, His-158, and Ser-262. Residue Ser-262 is the Schiff-base intermediate with substrate; via pyruvic acid; for decarboxylase activity of the active site. Pyruvic acid (Ser); by autocatalysis is present on Ser-262.

Belongs to the phosphatidylserine decarboxylase family. PSD-B subfamily. Prokaryotic type I sub-subfamily. Heterodimer of a large membrane-associated beta subunit and a small pyruvoyl-containing alpha subunit. Requires pyruvate as cofactor. In terms of processing, is synthesized initially as an inactive proenzyme. Formation of the active enzyme involves a self-maturation process in which the active site pyruvoyl group is generated from an internal serine residue via an autocatalytic post-translational modification. Two non-identical subunits are generated from the proenzyme in this reaction, and the pyruvate is formed at the N-terminus of the alpha chain, which is derived from the carboxyl end of the proenzyme. The autoendoproteolytic cleavage occurs by a canonical serine protease mechanism, in which the side chain hydroxyl group of the serine supplies its oxygen atom to form the C-terminus of the beta chain, while the remainder of the serine residue undergoes an oxidative deamination to produce ammonia and the pyruvoyl prosthetic group on the alpha chain. During this reaction, the Ser that is part of the protease active site of the proenzyme becomes the pyruvoyl prosthetic group, which constitutes an essential element of the active site of the mature decarboxylase.

The protein resides in the cell membrane. It catalyses the reaction a 1,2-diacyl-sn-glycero-3-phospho-L-serine + H(+) = a 1,2-diacyl-sn-glycero-3-phosphoethanolamine + CO2. The protein operates within phospholipid metabolism; phosphatidylethanolamine biosynthesis; phosphatidylethanolamine from CDP-diacylglycerol: step 2/2. Its function is as follows. Catalyzes the formation of phosphatidylethanolamine (PtdEtn) from phosphatidylserine (PtdSer). In Alkalilimnicola ehrlichii (strain ATCC BAA-1101 / DSM 17681 / MLHE-1), this protein is Phosphatidylserine decarboxylase proenzyme.